We begin with the raw amino-acid sequence, 478 residues long: Crt homolog 3 (478 aa).

The tract at residues Met-1–Pro-30 is disordered. The Cytoplasmic portion of the chain corresponds to Met-1–Thr-52. A helical membrane pass occupies residues Leu-53–Leu-73. Residues Lys-74–Tyr-83 lie on the Vacuolar side of the membrane. A helical transmembrane segment spans residues Gly-84 to Trp-104. Residues Tyr-105–Lys-124 are Cytoplasmic-facing. Residues Phe-125–Ser-145 form a helical membrane-spanning segment. Residues Thr-146 to Pro-149 are Vacuolar-facing. A helical membrane pass occupies residues Leu-150 to Leu-170. The Cytoplasmic portion of the chain corresponds to Arg-171 to Gln-178. A helical membrane pass occupies residues Leu-179–Gly-199. Residues Gly-200 to Asn-205 are Vacuolar-facing. The chain crosses the membrane as a helical span at residues Ile-206–Tyr-226. Residues Lys-227–Asp-237 are Cytoplasmic-facing. The helical transmembrane segment at Val-238–Pro-258 threads the bilayer. The Vacuolar portion of the chain corresponds to Val-259–Trp-322. Residue Asn-296 is glycosylated (N-linked (GlcNAc...) asparagine). A helical transmembrane segment spans residues Ile-323–Leu-343. At Lys-344–Ser-352 the chain is on the cytoplasmic side. A helical membrane pass occupies residues Ile-353–Gly-373. Topologically, residues Ala-374 to Thr-376 are vacuolar. The helical transmembrane segment at Thr-377–Tyr-397 threads the bilayer. Residues Arg-398 to Asn-478 lie on the Cytoplasmic side of the membrane. Positions Lys-404–Gln-446 are disordered. Over residues Pro-406–Glu-415 the composition is skewed to basic and acidic residues.

The protein belongs to the CRT-like transporter family.

It is found in the vacuole membrane. Nutrient transporter. Involved in maintaining the osmotic homeostasis of the digestive vacuole. This Dictyostelium discoideum (Social amoeba) protein is Crt homolog 3 (crtp3).